The chain runs to 292 residues: Probable vesicular-fusion protein sec17 homolog (292 aa).

It belongs to the SNAP family.

It is found in the membrane. In terms of biological role, required for vesicular transport between the endoplasmic reticulum and the Golgi apparatus. The sequence is that of Probable vesicular-fusion protein sec17 homolog from Neurospora crassa (strain ATCC 24698 / 74-OR23-1A / CBS 708.71 / DSM 1257 / FGSC 987).